The following is a 359-amino-acid chain: DNA-directed RNA polymerase RPB3-11 homolog (359 aa).

In the N-terminal section; belongs to the archaeal RpoD/eukaryotic RPB3 RNA polymerase subunit family. This sequence in the C-terminal section; belongs to the archaeal RpoL/eukaryotic RPB11/RPC19 RNA polymerase subunit family. In terms of assembly, part of the viral DNA-directed RNA polymerase that consists of 8 polII-like subunits (RPB1, RPB2, RPB3, RPB5, RPB6, RPB7, RPB9, RPB10), a capping enzyme and a termination factor.

Its subcellular location is the host cytoplasm. It is found in the virion. Functionally, component of the DNA-directed RNA polymerase (RNAP) that catalyzes the transcription in the cytoplasm of viral DNA into RNA using the four ribonucleoside triphosphates as substrates. This chain is DNA-directed RNA polymerase RPB3-11 homolog, found in Ornithodoros (relapsing fever ticks).